Consider the following 29-residue polypeptide: Pyridoxal 5'-phosphate synthase subunit PdxS (29 aa).

Belongs to the PdxS/SNZ family. In terms of assembly, in the presence of PdxT, forms a dodecamer of heterodimers.

The enzyme catalyses aldehydo-D-ribose 5-phosphate + D-glyceraldehyde 3-phosphate + L-glutamine = pyridoxal 5'-phosphate + L-glutamate + phosphate + 3 H2O + H(+). The protein operates within cofactor biosynthesis; pyridoxal 5'-phosphate biosynthesis. Catalyzes the formation of pyridoxal 5'-phosphate from ribose 5-phosphate (RBP), glyceraldehyde 3-phosphate (G3P) and ammonia. The ammonia is provided by the PdxT subunit. Can also use ribulose 5-phosphate and dihydroxyacetone phosphate as substrates, resulting from enzyme-catalyzed isomerization of RBP and G3P, respectively. This is Pyridoxal 5'-phosphate synthase subunit PdxS from Clostridium pasteurianum.